The following is a 1058-amino-acid chain: Carbamoyl phosphate synthase large chain (1058 aa).

The carboxyphosphate synthetic domain stretch occupies residues 1-401 (MPKRKDIQKI…SLLKACRSLE (401 aa)). Arginine 129, arginine 169, glycine 175, glycine 176, arginine 208, isoleucine 210, glutamate 215, glycine 241, isoleucine 242, histidine 243, glutamine 284, and glutamate 298 together coordinate ATP. Residues 133 to 327 (KQLMQELDQP…IAKLAAKIAV (195 aa)) form the ATP-grasp 1 domain. Glutamine 284, glutamate 298, and asparagine 300 together coordinate Mg(2+). Mn(2+)-binding residues include glutamine 284, glutamate 298, and asparagine 300. The oligomerization domain stretch occupies residues 402 to 546 (IGVCHNEMTS…YSTYELENES (145 aa)). The interval 547–929 (VQSNKESILV…ALYKAFEANN (383 aa)) is carbamoyl phosphate synthetic domain. The ATP-grasp 2 domain occupies 671 to 861 (EKALKELGIP…MAQIATKLIL (191 aa)). ATP contacts are provided by arginine 707, serine 746, isoleucine 748, glutamate 752, glycine 777, valine 778, histidine 779, serine 780, glutamine 820, and glutamate 832. Glutamine 820, glutamate 832, and asparagine 834 together coordinate Mg(2+). Positions 820, 832, and 834 each coordinate Mn(2+). The MGS-like domain occupies 930 to 1058 (SHLSEFGQIV…ESRCFNIEAI (129 aa)). The allosteric domain stretch occupies residues 930 to 1058 (SHLSEFGQIV…ESRCFNIEAI (129 aa)).

It belongs to the CarB family. Composed of two chains; the small (or glutamine) chain promotes the hydrolysis of glutamine to ammonia, which is used by the large (or ammonia) chain to synthesize carbamoyl phosphate. Tetramer of heterodimers (alpha,beta)4. Requires Mg(2+) as cofactor. Mn(2+) is required as a cofactor.

It carries out the reaction hydrogencarbonate + L-glutamine + 2 ATP + H2O = carbamoyl phosphate + L-glutamate + 2 ADP + phosphate + 2 H(+). The enzyme catalyses hydrogencarbonate + NH4(+) + 2 ATP = carbamoyl phosphate + 2 ADP + phosphate + 2 H(+). The protein operates within amino-acid biosynthesis; L-arginine biosynthesis; carbamoyl phosphate from bicarbonate: step 1/1. It functions in the pathway pyrimidine metabolism; UMP biosynthesis via de novo pathway; (S)-dihydroorotate from bicarbonate: step 1/3. Its function is as follows. Large subunit of the glutamine-dependent carbamoyl phosphate synthetase (CPSase). CPSase catalyzes the formation of carbamoyl phosphate from the ammonia moiety of glutamine, carbonate, and phosphate donated by ATP, constituting the first step of 2 biosynthetic pathways, one leading to arginine and/or urea and the other to pyrimidine nucleotides. The large subunit (synthetase) binds the substrates ammonia (free or transferred from glutamine from the small subunit), hydrogencarbonate and ATP and carries out an ATP-coupled ligase reaction, activating hydrogencarbonate by forming carboxy phosphate which reacts with ammonia to form carbamoyl phosphate. This Streptococcus pyogenes serotype M49 (strain NZ131) protein is Carbamoyl phosphate synthase large chain.